The following is a 95-amino-acid chain: Aspartyl/glutamyl-tRNA(Asn/Gln) amidotransferase subunit C (95 aa).

It belongs to the GatC family. Heterotrimer of A, B and C subunits.

The catalysed reaction is L-glutamyl-tRNA(Gln) + L-glutamine + ATP + H2O = L-glutaminyl-tRNA(Gln) + L-glutamate + ADP + phosphate + H(+). The enzyme catalyses L-aspartyl-tRNA(Asn) + L-glutamine + ATP + H2O = L-asparaginyl-tRNA(Asn) + L-glutamate + ADP + phosphate + 2 H(+). In terms of biological role, allows the formation of correctly charged Asn-tRNA(Asn) or Gln-tRNA(Gln) through the transamidation of misacylated Asp-tRNA(Asn) or Glu-tRNA(Gln) in organisms which lack either or both of asparaginyl-tRNA or glutaminyl-tRNA synthetases. The reaction takes place in the presence of glutamine and ATP through an activated phospho-Asp-tRNA(Asn) or phospho-Glu-tRNA(Gln). In Halothermothrix orenii (strain H 168 / OCM 544 / DSM 9562), this protein is Aspartyl/glutamyl-tRNA(Asn/Gln) amidotransferase subunit C.